Here is a 140-residue protein sequence, read N- to C-terminus: Phosphopantetheine adenylyltransferase (140 aa).

A substrate-binding site is contributed by Ser-9. ATP-binding positions include 9-10 (SF) and His-17. Substrate is bound by residues Lys-41, Thr-74, and Arg-88. ATP is bound by residues 89–91 (GLR), Glu-99, and 124–130 (KRSLSST).

The protein belongs to the bacterial CoaD family. Homohexamer. It depends on Mg(2+) as a cofactor.

It localises to the cytoplasm. The enzyme catalyses (R)-4'-phosphopantetheine + ATP + H(+) = 3'-dephospho-CoA + diphosphate. The protein operates within cofactor biosynthesis; coenzyme A biosynthesis; CoA from (R)-pantothenate: step 4/5. Functionally, reversibly transfers an adenylyl group from ATP to 4'-phosphopantetheine, yielding dephospho-CoA (dPCoA) and pyrophosphate. The sequence is that of Phosphopantetheine adenylyltransferase from Mycoplasma mycoides subsp. mycoides SC (strain CCUG 32753 / NCTC 10114 / PG1).